The following is a 290-amino-acid chain: Zinc finger AN1 and C2H2 domain-containing stress-associated protein 16 (290 aa).

2 AN1-type zinc fingers span residues 7-55 (PNLG…QKDV) and 95-145 (VTKK…KPES). Zn(2+)-binding residues include cysteine 13, cysteine 18, cysteine 28, cysteine 31, cysteine 36, histidine 39, histidine 45, cysteine 47, cysteine 101, cysteine 106, cysteine 118, cysteine 121, cysteine 126, histidine 129, histidine 135, and cysteine 137. C2H2-type zinc fingers lie at residues 224–247 (EQCV…EKSH) and 261–284 (DVCP…ERDH).

Its function is as follows. May be involved in environmental stress response. The chain is Zinc finger AN1 and C2H2 domain-containing stress-associated protein 16 (SAP16) from Oryza sativa subsp. japonica (Rice).